The sequence spans 2843 residues: Adenomatous polyposis coli protein (2843 aa).

At Ala2 the chain carries N-acetylalanine. Residues 2–61 (AAASYDQLLKQVEALKMENSNLRQELEDNSNHLTKLETEASNMKEVLKQLQGSIEDEAMA) adopt a coiled-coil conformation. Phosphoserine occurs at positions 107 and 111. Residues 127–248 (SRESTGYLEE…ATEAERSSQN (122 aa)) adopt a coiled-coil conformation. The disordered stretch occupies residues 239–305 (ATEAERSSQN…STHSAPRRLT (67 aa)). Over residues 241-261 (EAERSSQNKHETGSHDAERQN) the composition is skewed to basic and acidic residues. Over residues 271–282 (MATSGNGQGSTT) the composition is skewed to polar residues. Positions 290-299 (SVLSSSSTHS) are enriched in low complexity. 7 ARM repeats span residues 453–495 (LMKL…HYSI), 505–547 (LTNL…IASV), 548–591 (LRNL…VLSA), 592–638 (LWNL…GGGI), 639–683 (LRNV…ACGT), 684–725 (LWNL…SAAA), and 726–767 (LRNL…LDAQ). Ser744, Ser748, and Ser780 each carry phosphoserine. Residues 828–878 (TTVLPSSSSSRGSLDSSRSEKDRSLERERGIGLGNYHPATENPGTSSKRGL) form a disordered region. Low complexity predominate over residues 833 to 843 (SSSSSRGSLDS). Over residues 844–857 (SRSEKDRSLERERG) the composition is skewed to basic and acidic residues. Positions 869–878 (NPGTSSKRGL) are enriched in polar residues. At Ser908 the chain carries Phosphoserine. Disordered stretches follow at residues 923–943 (RRSS…SENS) and 958–987 (RSSN…ESYS). A compositionally biased stretch (polar residues) spans 927–943 (AAHTHSNTYNFTKSENS). Residues 960–1337 (SNDSLNSVSS…QHPRTKSSRL (378 aa)) are responsible for down-regulation through a process mediated by direct ubiquitination. Residues 961–971 (NDSLNSVSSSD) are compositionally biased toward low complexity. A phosphoserine mark is found at Ser987, Ser1038, and Ser1042. The segment at 1020–1169 (ELDTPINYSL…TNYSIKYNEE (150 aa)) is interaction with catenins. Disordered regions lie at residues 1099–1169 (VSPY…YNEE), 1190–1244 (SQKQ…GQPQ), and 1311–1376 (IGTR…PEHY). The segment covering 1107–1130 (ANGSETNRVGSNHGINQNVSQSLC) has biased composition (polar residues). Positions 1146–1159 (RYSEEEQHEEEERP) are enriched in basic and acidic residues. Residues 1190–1224 (SQKQSFSFSKSSSGQSSKTEHMSSSSENTSTPSSN) are compositionally biased toward low complexity. Over residues 1225–1244 (AKRQNQLHPSSAQSRSGQPQ) the composition is skewed to polar residues. Low complexity-rich tracts occupy residues 1335 to 1345 (SRLQGSSLSSE) and 1355 to 1366 (SSGAKSPSKSGA). Ser1360, Ser1371, Ser1385, Ser1392, and Ser1395 each carry phosphoserine. 5 disordered regions span residues 1403-1475 (SSVQ…VNAA), 1526-1569 (PPVQ…DSDD), 1583-1611 (MPTK…KPSQ), 1664-1717 (SPPN…DDNK), and 1729-1836 (NSAM…RVRG). The residue at position 1438 (Thr1438) is a Phosphothreonine. 2 stretches are compositionally biased toward basic and acidic residues: residues 1448 to 1466 (TKRE…RESG) and 1540 to 1564 (EQPK…KDLL). Residue Ser1567 is modified to Phosphoserine. Residues 1683–1698 (EFEKRDTIPTEGRSTD) show a composition bias toward basic and acidic residues. The segment covering 1735-1744 (GKSHKPFRVK) has biased composition (basic residues). Ser1774 is modified (phosphoserine). 2 stretches are compositionally biased toward basic and acidic residues: residues 1785–1794 (YRTRVRKNAD) and 1804–1813 (VFSDNKDSKK). A phosphoserine mark is found at Ser1861, Ser1863, and Ser1864. Positions 1866 to 1893 (DFDDDDVDLSREKAELRKAKENKESEAK) are highly charged. Basic and acidic residues predominate over residues 1881–1896 (LRKAKENKESEAKVTS). Disordered stretches follow at residues 1881 to 1950 (LRKA…TDEK), 1965 to 2011 (HNSS…APKS), and 2043 to 2072 (ISSA…GGIL). Polar residues-rich tracts occupy residues 1897–1913 (HTEL…TQAI) and 1928–1938 (QKQSTFPQSSK). A compositionally biased stretch (basic and acidic residues) spans 1939–1950 (DIPDRGAATDEK). Ser1971 and Ser1973 each carry phosphoserine. Basic and acidic residues predominate over residues 1979–1991 (NNNKENEPIKETE). Residues 2035 to 2059 (EDDLLQECISSAMPKKKKPSRLKGD) form an interaction with AXIN1 region. Ser2088, Ser2093, Ser2125, Ser2129, Ser2130, and Ser2132 each carry phosphoserine. Disordered stretches follow at residues 2147 to 2635 (PFHL…SGAT) and 2667 to 2714 (NNPR…VPMR). Thr2151 carries the post-translational modification Phosphothreonine. The interval 2167–2674 (ILKPGEKSTL…PINNPRSGRS (508 aa)) is basic region. Residues 2169–2187 (KPGEKSTLETKKIESESKG) show a composition bias toward basic and acidic residues. Polar residues-rich tracts occupy residues 2203–2223 (VRSN…NMPS) and 2257–2271 (ASKS…TTSP). 3 positions are modified to phosphoserine: Ser2260, Ser2270, and Ser2283. Residues 2286–2331 (ARQTSQIGGSSKAPSRSGSRDSTPSRPAQQPLSRPIQSPGRNSISP) are compositionally biased toward polar residues. Over residues 2348 to 2369 (TSSPSTASTKSSGSGKMSYTSP) the composition is skewed to low complexity. Composition is skewed to polar residues over residues 2370-2409 (GRQM…NGNG) and 2418-2427 (RMSSTKSSGS). Over residues 2459-2477 (SASFESLSPSSRPASPTRS) the composition is skewed to low complexity. Phosphoserine is present on residues Ser2473 and Ser2535. Positions 2475–2843 (TRSQAQTPVL…HSGSYLVTSV (369 aa)) are interaction with DLG1. Residues 2518–2535 (NDGRPAKRHDIARSHSES) show a composition bias toward basic and acidic residues. Positions 2555-2568 (SSSLPRVSTWRRTG) are enriched in polar residues. Ser2569 bears the Phosphoserine mark. Over residues 2569–2579 (SSSSILSASSE) the composition is skewed to low complexity. Residues 2580 to 2592 (SSEKAKSEDEKHV) are compositionally biased toward basic and acidic residues. Polar residues-rich tracts occupy residues 2593-2608 (NSIS…QVSA), 2620-2635 (FSPT…SGAT), and 2668-2679 (NPRSGRSPTGNT). Ser2671 and Ser2674 each carry phosphoserine. Positions 2674 to 2843 (SPTGNTPPVI…HSGSYLVTSV (170 aa)) are interaction with MAPRE1. At Thr2679 the chain carries Phosphothreonine. Phosphoserine is present on residues Ser2710 and Ser2724. Residues 2729–2843 (DAPDQKGTEI…HSGSYLVTSV (115 aa)) are disordered. Polar residues predominate over residues 2741–2757 (GQNNPVPVSETNESSIV). Low complexity predominate over residues 2763–2774 (SSSSSSKHSSPS). Over residues 2784–2812 (FNYNPSPRKSSADSTSARPSQIPTPVNNN) the composition is skewed to polar residues. A Phosphoserine modification is found at Ser2789. A Microtubule tip localization signal motif is present at residues 2803 to 2806 (SQIP). The PDZ-binding motif lies at 2841–2843 (TSV).

The protein belongs to the adenomatous polyposis coli (APC) family. In terms of assembly, forms homooligomers. Found in a complex consisting of ARHGEF4, APC and CTNNB1. Found in a complex composed of MACF1, APC, AXIN1, CTNNB1 and GSK3B. The complex composed, at least, of APC, CTNNB1 and GSK3B interacts with JPT1; the interaction requires the inactive form of GSK3B (phosphorylated at 'Ser-9'). Interacts with APC2. Interacts with DLG1 (via PDZ domains) and DLG3 (via PDZ domains). Interacts with alpha- and beta-catenins. Interacts with AXIN1 (via RGS domain). Interacts with ARHGEF4 (via N-terminus). Interacts (via C-terminal residues 2674-2843) with MAPRE1 (via C-terminal residues 206-211); the interaction inhibits association with and bundling of F-actin. Interacts with MAPRE2 and MAPRE3 (via C-terminus). Interacts with DIAPH1; DIAPH1 acts as a scaffold protein for MAPRE1 and APC to stabilize microtubules and promote cell migration. Interacts with DIAPH2. Interacts with SCRIB; may mediate APC targeting to adherens junctions of epithelial cells. Interacts with SPATA13 (via N-terminus and SH3 domain). Interacts with ASAP1 (via SH3 domain). Interacts (at the cell membrane) with AMER1 and AMER2 (via ARM repeats). Interacts with KHDRBS1. Interacts with actin; binds both to F-actin and actin filament bundles. Post-translationally, phosphorylated; phosphorylation enhances the F-actin bundling activity. Phosphorylated by GSK3B. Ubiquitinated, leading to its degradation by the proteasome. Ubiquitination is facilitated by Axin. Deubiquitinated by ZRANB1/TRABID. As to expression, expressed in a variety of tissues: brain, small intestine, colon, thymus, skeletal muscle, heart, prostate, lung, spleen, ovary, testis kidney, placenta, blood and liver. Isoform 1A: Very strongly expressed in brain but has relatively low expression levels in other tissues. Isoform 1B: Predominant form in all tissues except for brain, including gastric mucosa and blood.

It is found in the cell junction. The protein resides in the adherens junction. The protein localises to the cytoplasm. It localises to the cytoskeleton. Its subcellular location is the cell projection. It is found in the lamellipodium. The protein resides in the ruffle membrane. The protein localises to the cell membrane. Functionally, tumor suppressor. Promotes rapid degradation of CTNNB1 and participates in Wnt signaling as a negative regulator. APC activity is correlated with its phosphorylation state. Activates the GEF activity of SPATA13 and ARHGEF4. Plays a role in hepatocyte growth factor (HGF)-induced cell migration. Required for MMP9 up-regulation via the JNK signaling pathway in colorectal tumor cells. Associates with both microtubules and actin filaments, components of the cytoskeleton. Plays a role in mediating the organization of F-actin into ordered bundles. Functions downstream of Rho GTPases and DIAPH1 to selectively stabilize microtubules. Acts as a mediator of ERBB2-dependent stabilization of microtubules at the cell cortex. It is required for the localization of MACF1 to the cell membrane and this localization of MACF1 is critical for its function in microtubule stabilization. This Homo sapiens (Human) protein is Adenomatous polyposis coli protein.